Reading from the N-terminus, the 469-residue chain is NADH-quinone oxidoreductase subunit N (469 aa).

The next 14 membrane-spanning stretches (helical) occupy residues 2 to 22 (IALLPFILSLAATFINIFLCV), 28 to 48 (RYSINLNILFWVIIFISFFIV), 70 to 90 (FSFCFGVVLSALMIIFLISSF), 101 to 121 (EMFALASLAGFGLLAMSLSVE), 122 to 142 (LILTLIFLEVASISIYAMIAM), 157 to 177 (FLLSSFMSAFYLLGAAFVFGV), 194 to 214 (FLSIIGMILVLSMMFFKIAIF), 233 to 253 (GFLASAFKLASFAILIKLCFL), 261 to 281 (ILQGIFAILAILSMFAGNLLS), 290 to 310 (ILIAAGIVHSGYIFINLSSVG), 315 to 335 (IYPAIFYLSTYTIVVGFLFAI), 361 to 381 (AFAFTVICLSFIGFPYSVGFL), 398 to 418 (LAIFGIINTIFSVYYYLKIII), and 447 to 467 (ILFIILEGSGIFSIISFLNLF).

Belongs to the complex I subunit 2 family. In terms of assembly, NDH-1 is composed of 14 different subunits. Subunits NuoA, H, J, K, L, M, N constitute the membrane sector of the complex.

Its subcellular location is the cell inner membrane. It catalyses the reaction a quinone + NADH + 5 H(+)(in) = a quinol + NAD(+) + 4 H(+)(out). Functionally, NDH-1 shuttles electrons from NADH, via FMN and iron-sulfur (Fe-S) centers, to quinones in the respiratory chain. The immediate electron acceptor for the enzyme in this species is believed to be ubiquinone. Couples the redox reaction to proton translocation (for every two electrons transferred, four hydrogen ions are translocated across the cytoplasmic membrane), and thus conserves the redox energy in a proton gradient. The chain is NADH-quinone oxidoreductase subunit N from Campylobacter fetus subsp. fetus (strain 82-40).